We begin with the raw amino-acid sequence, 194 residues long: Imidazoleglycerol-phosphate dehydratase (194 aa).

The protein belongs to the imidazoleglycerol-phosphate dehydratase family.

It is found in the cytoplasm. It catalyses the reaction D-erythro-1-(imidazol-4-yl)glycerol 3-phosphate = 3-(imidazol-4-yl)-2-oxopropyl phosphate + H2O. It functions in the pathway amino-acid biosynthesis; L-histidine biosynthesis; L-histidine from 5-phospho-alpha-D-ribose 1-diphosphate: step 6/9. The chain is Imidazoleglycerol-phosphate dehydratase from Streptococcus gordonii (strain Challis / ATCC 35105 / BCRC 15272 / CH1 / DL1 / V288).